We begin with the raw amino-acid sequence, 471 residues long: Glutamate--tRNA ligase (471 aa).

Residues 9 to 19 (PSPTGYLHVGG) carry the 'HIGH' region motif. Zn(2+)-binding residues include C98, C100, C125, and H127. Positions 237–241 (KLSKR) match the 'KMSKS' region motif. K240 contributes to the ATP binding site.

It belongs to the class-I aminoacyl-tRNA synthetase family. Glutamate--tRNA ligase type 1 subfamily. Monomer. Zn(2+) serves as cofactor.

It is found in the cytoplasm. It catalyses the reaction tRNA(Glu) + L-glutamate + ATP = L-glutamyl-tRNA(Glu) + AMP + diphosphate. In terms of biological role, catalyzes the attachment of glutamate to tRNA(Glu) in a two-step reaction: glutamate is first activated by ATP to form Glu-AMP and then transferred to the acceptor end of tRNA(Glu). The chain is Glutamate--tRNA ligase from Escherichia coli (strain SMS-3-5 / SECEC).